A 279-amino-acid chain; its full sequence is MTKQIIVTDSTSDLSKEYLEANNIHVIPLSLTIEGASYVDQVDITSEEFINHIENDEDVKTSQPAIGEFISAYEELGKDGSEIISIHLSSGLSGTYNTAYQASQMVDANVTVIDSKSISFSLGYQIQHLVELVKEGVSTSEIVKKLNHLRENIKLFVVIGQLNQLIKGGRISKTKGLIGNLMKIKPIGTLDDGRLELVHNARTQNSSIQYLKKEIAEFIGDHEIKSIGVAHANVIEYVDKLKKVFNEAFHVNNYDINVTTPVISAHTGQGAIGLVVLKK.

Residues 4-278 (QIIVTDSTSD…QGAIGLVVLK (275 aa)) enclose the DegV domain. Thr61 and Ser93 together coordinate hexadecanoate.

Its function is as follows. May bind long-chain fatty acids, such as palmitate, and may play a role in lipid transport or fatty acid metabolism. The polypeptide is DegV domain-containing protein SA1258 (Staphylococcus aureus (strain N315)).